The primary structure comprises 880 residues: Valine--tRNA ligase (880 aa).

The 'HIGH' region motif lies at 49 to 59 (PNVTGKLHLGH). Residues 525–529 (KMSKS) carry the 'KMSKS' region motif. Lysine 528 contacts ATP. Positions 809-880 (LEGLINIEEE…VKARLAELKR (72 aa)) form a coiled coil.

The protein belongs to the class-I aminoacyl-tRNA synthetase family. ValS type 1 subfamily. In terms of assembly, monomer.

It localises to the cytoplasm. The catalysed reaction is tRNA(Val) + L-valine + ATP = L-valyl-tRNA(Val) + AMP + diphosphate. Its function is as follows. Catalyzes the attachment of valine to tRNA(Val). As ValRS can inadvertently accommodate and process structurally similar amino acids such as threonine, to avoid such errors, it has a 'posttransfer' editing activity that hydrolyzes mischarged Thr-tRNA(Val) in a tRNA-dependent manner. The protein is Valine--tRNA ligase (valS) of Geobacillus stearothermophilus (Bacillus stearothermophilus).